A 708-amino-acid polypeptide reads, in one-letter code: Protein psiF (708 aa).

An N-terminal signal peptide occupies residues Met-1 to Ala-19. Topologically, residues Asp-20–Gly-643 are extracellular. Asn-78, Asn-116, Asn-222, Asn-317, Asn-318, Asn-371, Asn-498, and Asn-600 each carry an N-linked (GlcNAc...) asparagine glycan. A PA14 domain is found at Thr-103–Lys-263. A helical transmembrane segment spans residues Ile-644–Ile-664. Residues Phe-665–Glu-708 are Cytoplasmic-facing. Residues Met-682 to Leu-702 show a composition bias toward polar residues. The interval Met-682–Glu-708 is disordered.

This sequence belongs to the prespore-cell-inducing factor family. Forms a complex with dicB.

It localises to the membrane. The protein localises to the secreted. Functionally, acts as a quorum sensing protein regulating discoidin gene expression during growth and development. D.discoideum is a single-celled amoebae and switches to multicellular development when food becomes limited. As the growing cells reach a high density, they begin expressing discoidin genes. The ability of psiF/dicA to induce discoidin gene expression when present in conditioned medium, suggests that it allows cells to sense their local density. This chain is Protein psiF (psiF), found in Dictyostelium discoideum (Social amoeba).